The chain runs to 1840 residues: Sodium channel protein type 4 subunit alpha (1840 aa).

Over 1–131 (MASSSLPNLV…RVAIKVLIHA (131 aa)) the chain is Cytoplasmic. Basic and acidic residues predominate over residues 36-60 (EARLQRNKQMEIEEPERKPRSDLEA). Residues 36–63 (EARLQRNKQMEIEEPERKPRSDLEAGKN) are disordered. Residues 113–448 (LLSPFSIVRR…VVAMAYAEQN (336 aa)) form an I repeat. A helical membrane pass occupies residues 132–150 (LFSMFIMITILTNCVFMTM). Over 151 to 157 (SNPPSWS) the chain is Extracellular. Residues 158–178 (KHVEYTFTGIYTFESLIKMLA) form a helical membrane-spanning segment. The Cytoplasmic segment spans residues 179–192 (RGFCIDDFTFLRDP). The chain crosses the membrane as a helical span at residues 193–210 (WNWLDFSVITMAYVTEFV). Topologically, residues 211–216 (DLGNIS) are extracellular. Residues 217-233 (ALRTFRVLRALKTITVI) traverse the membrane as a helical segment. The Cytoplasmic segment spans residues 234–252 (PGLKTIVGALIQSVKKLSD). A helical transmembrane segment spans residues 253-272 (VMILTVFCLSVFALVGLQLF). Residues 273–385 (MGNLRQKCVR…PNYGYTSYDT (113 aa)) are Extracellular-facing. An intrachain disulfide couples Cys280 to Cys354. N-linked (GlcNAc...) asparagine glycans are attached at residues Asn288, Asn291, Asn297, Asn303, Asn309, Asn315, Asn327, and Asn356. A disulfide bridge connects residues Cys363 and Cys369. The pore-forming intramembrane region spans 386 to 410 (FSWAFLALFRLMTQDYWENLFQLTL). Topologically, residues 411–417 (RAAGKTY) are extracellular. Residues 418–438 (MIFFVVIIFLGSFYLINLILA) traverse the membrane as a helical segment. Residues 439-572 (VVAMAYAEQN…HIIYLIVMDP (134 aa)) lie on the Cytoplasmic side of the membrane. The segment at 481 to 522 (AAQALESGEEADGDPTHNKDCNGSLDASGEKGPPRPSCSADS) is disordered. Ser487 is modified (phosphoserine). An II repeat occupies 554 to 826 (CCAPWVKFKH…QIAIGRIKWG (273 aa)). The helical transmembrane segment at 573 to 591 (FVDLGITICIVLNTLFMAM) threads the bilayer. Topologically, residues 592–602 (EHYPMTEHFDN) are extracellular. A helical membrane pass occupies residues 603–622 (VLSVGNLVFTGIFTAEMVLK). Residues 623 to 636 (LIAMDPYEYFQQGW) lie on the Cytoplasmic side of the membrane. A helical transmembrane segment spans residues 637–656 (NIFDSFIVTLSLVELGLANV). Topologically, residues 657–658 (QG) are extracellular. The helical transmembrane segment at 659–676 (LSVLRSFRLLRVFKLAKS) threads the bilayer. The Cytoplasmic portion of the chain corresponds to 677–692 (WPTLNMLIKIIGNSVG). A helical membrane pass occupies residues 693 to 711 (ALGNLTLVLAIIVFIFAVV). Residues 712–740 (GMQLFGKSYKECVCKIASDCNLPRWHMND) are Extracellular-facing. A disulfide bridge links Cys725 with Cys731. Residues 741–761 (FFHSFLIVFRILCGEWIETMW) constitute an intramembrane region (pore-forming). At 762-772 (DCMEVAGQAMC) the chain is on the extracellular side. An intrachain disulfide couples Cys763 to Cys772. Residues 773-791 (LTVFLMVMVIGNLVVLNLF) traverse the membrane as a helical segment. Topologically, residues 792-1025 (LALLLSSFSA…ACFKIVEHNW (234 aa)) are cytoplasmic. Disordered regions lie at residues 854-884 (EPGG…LKDN) and 925-983 (DLEM…GEQP). Basic and acidic residues predominate over residues 868-884 (EDEKKEPPPEDKELKDN). Acidic residues-rich tracts occupy residues 925–940 (DLEM…FSEP) and 968–983 (EDPE…GEQP). One copy of the III repeat lies at 1006–1319 (RGKMWWTLRR…KKYYNAMKKL (314 aa)). The helical transmembrane segment at 1026 to 1043 (FETFIVFMILLSSGALAF) threads the bilayer. At 1044 to 1056 (EDIYIEQRRVIRT) the chain is on the extracellular side. The chain crosses the membrane as a helical span at residues 1057–1075 (ILEYADKVFTYIFILEMLL). Over 1076–1089 (KWVAYGFKVYFTNA) the chain is Cytoplasmic. The helical transmembrane segment at 1090–1108 (WCWLDFLIVDVSIISLVAN) threads the bilayer. Topologically, residues 1109–1116 (WLGYSELG) are extracellular. The chain crosses the membrane as a helical span at residues 1117 to 1135 (PIKSLRTLRALRPLRALSR). Topologically, residues 1136-1152 (FEGMRVVVNALLGAIPS) are cytoplasmic. Residues 1153–1172 (IMNVLLVCLIFWLIFSIMGV) traverse the membrane as a helical segment. Topologically, residues 1173–1223 (NLFAGKFYYCVNTTTSERFDISVVNNKSESESLMYTGQVRWMNVKVNYDNV) are extracellular. Residue Asn1198 is glycosylated (N-linked (GlcNAc...) asparagine). Residues 1224–1245 (GLGYLSLLQVATFKGWMDIMYA) constitute an intramembrane region (pore-forming). Over 1246-1262 (AVDSREKEEQPHYEVNL) the chain is Extracellular. Residues 1263 to 1284 (YMYLYFVIFIIFGSFFTLNLFI) traverse the membrane as a helical segment. The Cytoplasmic portion of the chain corresponds to 1285-1347 (GVIIDNFNQQ…MVYDFVTKQV (63 aa)). The important for rapid channel inactivation stretch occupies residues 1303–1305 (IFM). Residues 1328 to 1626 (IPRPQNKIQG…WEKFDPDATQ (299 aa)) form an IV repeat. Residues 1348 to 1365 (FDISIMILICLNMVTMMV) form a helical membrane-spanning segment. Topologically, residues 1366 to 1376 (ETDDQSQLKVD) are extracellular. Residues 1377–1395 (ILYNINMVFIIIFTGECVL) traverse the membrane as a helical segment. The Cytoplasmic portion of the chain corresponds to 1396 to 1407 (KMFALRHYYFTI). Residues 1408–1425 (GWNIFDFVVVILSIVGLA) traverse the membrane as a helical segment. The Extracellular segment spans residues 1426–1438 (LSDLIQKYFVSPT). Residues 1439–1455 (LFRVIRLARIGRVLRLI) form a helical membrane-spanning segment. Residues 1456–1474 (RGAKGIRTLLFALMMSLPA) lie on the Cytoplasmic side of the membrane. Residues 1475 to 1492 (LFNIGLLLFLVMFIYSIF) traverse the membrane as a helical segment. Topologically, residues 1493–1514 (GMSNFAYVKKESGIDDMFNFET) are extracellular. Positions 1515–1537 (FGNSIICLFEITTSAGWDGLLNP) form an intramembrane region, pore-forming. The Extracellular segment spans residues 1538–1567 (ILNSGPPDCDPTLENPGTNVRGDCGNPSIG). Cys1546 and Cys1561 form a disulfide bridge. Residues 1568–1590 (ICFFCSYIIISFLIVVNMYIAII) traverse the membrane as a helical segment. At 1591-1840 (LENFNVATEE…VRPGVKESLV (250 aa)) the chain is on the cytoplasmic side. The 30-residue stretch at 1720 to 1749 (EEVCAIKIQRAYRRHLLQRSVKQASYMYRH) folds into the IQ domain. The interval 1775-1840 (HEKEGDGVQS…VRPGVKESLV (66 aa)) is disordered. The segment covering 1804–1813 (PTSSSDTALT) has biased composition (low complexity). The segment covering 1814 to 1824 (PSPPPLPPSSS) has biased composition (pro residues).

Belongs to the sodium channel (TC 1.A.1.10) family. Nav1.4/SCN4A subfamily. As to quaternary structure, the Nav1.4 voltage-gated sodium channel consists of an ion-conducting alpha subunit SCN4A which is functional on its own and a regulatory beta subunit SCN1B. SCN1B strongly enhances the presence of SCN4A at the cell surface. SCN1B is also required for rapid channel inactivation and recovery after inactivation. It prevents the decrease of channel activity in response to repetitive, high-frequency depolarizations. Interacts with the syntrophins SNTA1, SNTB1 and SNTB2 (via PDZ domain); probably links SCN4A to the actin cytoskeleton and the extracellular matrix via the dystrophin-associated protein complex and regulates its localization in muscle cells. Interacts with TMEM233; probable regulator of the channel. Detected in skeletal muscle.

The protein resides in the cell membrane. The enzyme catalyses Na(+)(in) = Na(+)(out). With respect to regulation, potently inhibited by tetrodotoxin and saxitoxin. Inhibited by the conotoxin GVIIJ. Pore-forming subunit of Nav1.4, a voltage-gated sodium (Nav) channel that directly mediates the depolarizing phase of action potentials in excitable membranes. Navs, also called VGSCs (voltage-gated sodium channels) or VDSCs (voltage-dependent sodium channels), operate by switching between closed and open conformations depending on the voltage difference across the membrane. In the open conformation they allow Na(+) ions to selectively pass through the pore, along their electrochemical gradient. The influx of Na+ ions provokes membrane depolarization, initiating the propagation of electrical signals throughout cells and tissues. Highly expressed in skeletal muscles, Nav1.4 generates the action potential crucial for muscle contraction. This chain is Sodium channel protein type 4 subunit alpha, found in Rattus norvegicus (Rat).